We begin with the raw amino-acid sequence, 210 residues long: NADH dehydrogenase [ubiquinone] iron-sulfur protein 8, mitochondrial (210 aa).

The N-terminal 34 residues, 1–34 (MRCLTTPVLLRALAQAARAGPPGGRSLHSSAVAA), are a transit peptide targeting the mitochondrion. 4Fe-4S ferredoxin-type domains lie at 102 to 131 (RRYP…IEAE) and 141 to 170 (TRYD…EGPN). Cysteine 111, cysteine 114, cysteine 117, cysteine 121, cysteine 150, cysteine 153, cysteine 156, and cysteine 160 together coordinate [4Fe-4S] cluster.

The protein belongs to the complex I 23 kDa subunit family. In terms of assembly, core subunit of respiratory chain NADH dehydrogenase (Complex I) which is composed of 45 different subunits. This is a component of the iron-sulfur (IP) fragment of the enzyme. Interacts with RAB5IF. The cofactor is [4Fe-4S] cluster.

The protein localises to the mitochondrion inner membrane. It carries out the reaction a ubiquinone + NADH + 5 H(+)(in) = a ubiquinol + NAD(+) + 4 H(+)(out). Functionally, core subunit of the mitochondrial membrane respiratory chain NADH dehydrogenase (Complex I) which catalyzes electron transfer from NADH through the respiratory chain, using ubiquinone as an electron acceptor. Essential for the catalytic activity and assembly of complex I. The protein is NADH dehydrogenase [ubiquinone] iron-sulfur protein 8, mitochondrial (NDUFS8) of Gorilla gorilla gorilla (Western lowland gorilla).